We begin with the raw amino-acid sequence, 235 residues long: Eukaryotic translation initiation factor 4E-1 (235 aa).

Over residues 1 to 16 (MAVEDTPKSVVTEEAK) the composition is skewed to basic and acidic residues. The segment at 1-59 (MAVEDTPKSVVTEEAKPNSIENPIDRYHEEGDDAEEGEIAGGEGDGNVDESSKSGVPES) is disordered. 2 EIF4G-binding regions span residues 60-63 (HPLE) and 70-106 (FDNP…NNMK). Residues 78–83 (KQTSWG), K110, and 128–129 (WE) each bind mRNA. C133 and C171 are joined by a disulfide. The tract at residues 154–163 (YTLLALIGEQ) is EIF4G-binding. Residues 178-183 (RGKQER) and 223-227 (KKLDR) contribute to the mRNA site.

This sequence belongs to the eukaryotic initiation factor 4E family. EIF4F is a multi-subunit complex, the composition of which varies with external and internal environmental conditions. It is composed of at least EIF4A, EIF4E and EIF4G. EIF4E is also known to interact with other partners. In higher plants two isoforms of EIF4F have been identified, named isoform EIF4F and isoform EIF(iso)4F. Isoform EIF4F has subunits p220 and p26, whereas isoform EIF(iso)4F has subunits p82 and p28. Interacts directly with EXA1. As to quaternary structure, (Microbial infection) Interacts with viral genome-linked protein (VPg); this interaction is possible in susceptible hosts but impaired in resistant plants. According to the redox status, the Cys-133-Cys-171 disulfide bridge may have a role in regulating protein function by affecting its ability to bind capped mRNA. In terms of tissue distribution, expressed in all tissues except in the cells of the specialization zone of the roots.

Its subcellular location is the nucleus. It localises to the cytoplasm. Component of the protein complex eIF4F, which is involved in the recognition of the mRNA cap, ATP-dependent unwinding of 5'-terminal secondary structure and recruitment of mRNA to the ribosome. Recognizes and binds the 7-methylguanosine-containing mRNA cap during an early step in the initiation of protein synthesis and facilitates ribosome binding by inducing the unwinding of the mRNAs secondary structures. Key component of recessive resistance to potyviruses. Functionally, (Microbial infection) Susceptibility host factor required for viral infection by recruiting viral RNAs to the host ribosomal complex via an interaction with viral genome-linked protein (VPg). This Arabidopsis thaliana (Mouse-ear cress) protein is Eukaryotic translation initiation factor 4E-1.